The following is a 338-amino-acid chain: Ketol-acid reductoisomerase (NADP(+)) (338 aa).

Residues 1–181 form the KARI N-terminal Rossmann domain; it reads MQVYYDKDCD…GGGRTGIIET (181 aa). NADP(+) contacts are provided by residues 24 to 27, arginine 47, serine 50, serine 52, and 82 to 85; these read YGSQ and DEFQ. Residue histidine 107 is part of the active site. NADP(+) is bound at residue glycine 133. The 146-residue stretch at 182-327 folds into the KARI C-terminal knotted domain; that stretch reads TFKDETETDL…EKLRGMMPWI (146 aa). Mg(2+) is bound by residues aspartate 190, glutamate 194, glutamate 226, and glutamate 230. Residue serine 251 participates in substrate binding.

It belongs to the ketol-acid reductoisomerase family. It depends on Mg(2+) as a cofactor.

It catalyses the reaction (2R)-2,3-dihydroxy-3-methylbutanoate + NADP(+) = (2S)-2-acetolactate + NADPH + H(+). It carries out the reaction (2R,3R)-2,3-dihydroxy-3-methylpentanoate + NADP(+) = (S)-2-ethyl-2-hydroxy-3-oxobutanoate + NADPH + H(+). It functions in the pathway amino-acid biosynthesis; L-isoleucine biosynthesis; L-isoleucine from 2-oxobutanoate: step 2/4. Its pathway is amino-acid biosynthesis; L-valine biosynthesis; L-valine from pyruvate: step 2/4. Its function is as follows. Involved in the biosynthesis of branched-chain amino acids (BCAA). Catalyzes an alkyl-migration followed by a ketol-acid reduction of (S)-2-acetolactate (S2AL) to yield (R)-2,3-dihydroxy-isovalerate. In the isomerase reaction, S2AL is rearranged via a Mg-dependent methyl migration to produce 3-hydroxy-3-methyl-2-ketobutyrate (HMKB). In the reductase reaction, this 2-ketoacid undergoes a metal-dependent reduction by NADPH to yield (R)-2,3-dihydroxy-isovalerate. This chain is Ketol-acid reductoisomerase (NADP(+)), found in Alcanivorax borkumensis (strain ATCC 700651 / DSM 11573 / NCIMB 13689 / SK2).